The primary structure comprises 426 residues: Serine hydroxymethyltransferase (426 aa).

(6S)-5,6,7,8-tetrahydrofolate is bound by residues Leu111 and 115–117 (GHL). Residue Lys220 is modified to N6-(pyridoxal phosphate)lysine.

This sequence belongs to the SHMT family. As to quaternary structure, homodimer. Pyridoxal 5'-phosphate serves as cofactor.

It localises to the cytoplasm. It catalyses the reaction (6R)-5,10-methylene-5,6,7,8-tetrahydrofolate + glycine + H2O = (6S)-5,6,7,8-tetrahydrofolate + L-serine. Its pathway is one-carbon metabolism; tetrahydrofolate interconversion. It functions in the pathway amino-acid biosynthesis; glycine biosynthesis; glycine from L-serine: step 1/1. Its function is as follows. Catalyzes the reversible interconversion of serine and glycine with tetrahydrofolate (THF) serving as the one-carbon carrier. This reaction serves as the major source of one-carbon groups required for the biosynthesis of purines, thymidylate, methionine, and other important biomolecules. Also exhibits THF-independent aldolase activity toward beta-hydroxyamino acids, producing glycine and aldehydes, via a retro-aldol mechanism. The sequence is that of Serine hydroxymethyltransferase from Orientia tsutsugamushi (strain Ikeda) (Rickettsia tsutsugamushi).